Reading from the N-terminus, the 311-residue chain is Ribosomal RNA small subunit methyltransferase H (311 aa).

S-adenosyl-L-methionine-binding positions include 34-36 (GGH), aspartate 54, phenylalanine 78, aspartate 100, and glutamine 107.

This sequence belongs to the methyltransferase superfamily. RsmH family.

It is found in the cytoplasm. The enzyme catalyses cytidine(1402) in 16S rRNA + S-adenosyl-L-methionine = N(4)-methylcytidine(1402) in 16S rRNA + S-adenosyl-L-homocysteine + H(+). Its function is as follows. Specifically methylates the N4 position of cytidine in position 1402 (C1402) of 16S rRNA. The protein is Ribosomal RNA small subunit methyltransferase H of Hamiltonella defensa subsp. Acyrthosiphon pisum (strain 5AT).